A 795-amino-acid polypeptide reads, in one-letter code: MVLKDDNSEKSIELFISIGLDEKTARNTINNNKVTANLTAVIHEAAVTDGCDRNTGNLLYSVATKFPTNALVHRPTLLKYIVNSKIKTPAQLEAAFAFFASTGPEDFKLNEFEEACGVGIEVSPEDIEKAVKGIFEENKKTILEQRYRTNVGELFGHVRKSLPWADPKIVKKLIDEKMYELLGEKTAADNEKPTKKKEKKEKPAKVEEKKAVVETTAEPSEEELNPYTIFPQPEQNFMVHTEVFFSDGSILRCSNTKEVLDKHLKVTGGKVYTRFPPEPNGYLHIGHAKAMFVDFGLAKERGGCCYLRYDDTNPEAEKEEYINHIEEIVKWMGWEPFKITYTSDYFQELYDLAVELIRRGHAYVDHQTADEIKEYREKKMNSPWRDRPIEESLKLFDEMRRGIIEEGKATLRMKQDMQSDNFNMYDLIAYRIKFAPHPKAGDKWCIYPSYDYAHCTVDSLENITHSLCTLEFETRRASYYWLLHSLSLYMPYVWEYSRLNVTNTVMSKRKLNYIVTNKYVDGWDDPRLLTLSGLRRRGVTSTAINAFVRGIGITRSDGSMIHVSRLEHHIREELNKTAPRTMVVLNPLKVVITNLESDKLIELDAKRWPDAQNDDPSAFYKVPFSRVVYIDQSDFRMKDSKDYYGLAPGKSVLLRYAFPIKCTNVVFADDNETVREIHAEYDPEKKSKPKGVLHWVAESSPGEEPIKVEVRLFEKLFNSENPAELNDAWLTDINPNSKMVISGAYAVSTLKDAAVGDRFQFERLGYYAVDKDSEPGKLVFNRTVTLRDSYGKGGK.

The disordered stretch occupies residues 188 to 220 (ADNEKPTKKKEKKEKPAKVEEKKAVVETTAEPS). Residues 200 to 212 (KEKPAKVEEKKAV) show a composition bias toward basic and acidic residues. The short motif at 277-287 (PEPNGYLHIGH) is the 'HIGH' region element. ATP-binding positions include 278-280 (EPN) and 284-290 (HIGHAKA). Residues D310 and Y450 each contribute to the L-glutamine site. ATP is bound by residues T469, 498 to 499 (RL), and 506 to 508 (MSK). Positions 505–509 (VMSKR) match the 'KMSKS' region motif.

The protein belongs to the class-I aminoacyl-tRNA synthetase family.

The protein localises to the cytoplasm. The protein resides in the cytosol. The catalysed reaction is tRNA(Gln) + L-glutamine + ATP = L-glutaminyl-tRNA(Gln) + AMP + diphosphate. The polypeptide is Glutamine--tRNA ligase, cytoplasmic (Arabidopsis thaliana (Mouse-ear cress)).